A 283-amino-acid chain; its full sequence is Protein BASIC PENTACYSTEINE5 (283 aa).

An alanine-zipper region spans residues Ala51–Ala86. Residues Lys63–Glu89 adopt a coiled-coil conformation. A disordered region spans residues Glu122–Trp176. Positions Ser151–Asn162 are enriched in basic and acidic residues.

This sequence belongs to the BBR/BPC family. Homodimer. Heterodimer. Expressed in seedlings, leaves and pistils.

Its subcellular location is the nucleus. Functionally, transcriptional regulator that specifically binds to GA-rich elements (GAGA-repeats) present in regulatory sequences of genes involved in developmental processes. The polypeptide is Protein BASIC PENTACYSTEINE5 (BPC5) (Arabidopsis thaliana (Mouse-ear cress)).